Here is a 303-residue protein sequence, read N- to C-terminus: Taste receptor type 2 member 13 (303 aa).

Residues 1-7 (MESALPS) are Extracellular-facing. A helical membrane pass occupies residues 8 to 28 (IFTLVIIAEFIIGNLSNGFIV). Residues 29 to 55 (LINCIDWVSKRELSSVDKLLIILAISR) lie on the Cytoplasmic side of the membrane. The chain crosses the membrane as a helical span at residues 56–76 (IGLIWEILVSWFLALHSLAIF). Topologically, residues 77 to 85 (VSGTGLRIM) are extracellular. A helical transmembrane segment spans residues 86–106 (IFSWIVSNHFNLWLATILSIF). Residues 107–128 (YLLKIASFSSPAFLYLKRRVNK) are Cytoplasmic-facing. Residues 129–149 (VILMILLGTLVFLFLNLIQIN) traverse the membrane as a helical segment. Topologically, residues 150–184 (MLIKDWLDRYERNTTWNFSMSDFETFSVSVRFTMT) are extracellular. 2 N-linked (GlcNAc...) asparagine glycosylation sites follow: N162 and N166. The chain crosses the membrane as a helical span at residues 185–205 (MFSLTPFTVAFISFLLLVFSL). At 206–232 (QKHLQKMQLNYKGHRDPRTKVHTNALK) the chain is on the cytoplasmic side. The chain crosses the membrane as a helical span at residues 233–253 (IVISFLLFYASFFLSILISWI). The Extracellular portion of the chain corresponds to 254–261 (SELYQNTV). A helical membrane pass occupies residues 262–282 (IYMLCETIGAFYPSSHSFLLI). Over 283 to 303 (LGNAKLRQAFLLVAAKVWAKR) the chain is Cytoplasmic.

It belongs to the G-protein coupled receptor T2R family.

The protein resides in the membrane. Its function is as follows. Receptor that may play a role in the perception of bitterness and is gustducin-linked. May play a role in sensing the chemical composition of the gastrointestinal content. The activity of this receptor may stimulate alpha gustducin, mediate PLC-beta-2 activation and lead to the gating of TRPM5. This is Taste receptor type 2 member 13 (TAS2R13) from Pan paniscus (Pygmy chimpanzee).